We begin with the raw amino-acid sequence, 404 residues long: MAEILERSGYLVKVRVEVPADRVKASYEALLKDLASRVRVPGFRPGKAPLKVVEARLGREALLQDLKERLVEETYPEAVRELGLSPVAARVVEQDLSEGEGFRYVAEVENYPEVRLPDWRSFALEVSPPEVTEEMVEKALEELRQRYAELVPVEREAQEKDHLFVRTEEGAEFPIDLAKALPHVREALLGKKAGDVVMVPVLNDKGEKVREVRTEVLEVKTLKLPELDEEFAKTLEAESLEDLKNRVRESLKRQAERAYEEARERAFLEKLAEGLEVEIPPSMLRAEERHLLEHLAEDLYRQGISLEAYLEALKVKGELEKFQEDLRKEAEKRVRIALAREKLAEELNPEVSEEEWQAYLQAAARAYGVSVQDLRRQFGEEGLARLKERLRQDKAVQEALKVLG.

Residues 160 to 225 form the PPIase FKBP-type domain; that stretch reads KDHLFVRTEE…VLEVKTLKLP (66 aa).

The protein belongs to the FKBP-type PPIase family. Tig subfamily.

The protein localises to the cytoplasm. The enzyme catalyses [protein]-peptidylproline (omega=180) = [protein]-peptidylproline (omega=0). Its function is as follows. Involved in protein export. Acts as a chaperone by maintaining the newly synthesized protein in an open conformation. Functions as a peptidyl-prolyl cis-trans isomerase. The protein is Trigger factor of Thermus thermophilus (strain ATCC BAA-163 / DSM 7039 / HB27).